The following is a 96-amino-acid chain: MSSISLSVLDDSVLIKPINEEKQGGIVLPSSAEKKPTKGEVIAIGEGSRNSSGERIALTVKAGDKVFYRQWAGTEIEHGSEKLIVMKESDILAIIK.

It belongs to the GroES chaperonin family. In terms of assembly, heptamer of 7 subunits arranged in a ring. Interacts with the chaperonin GroEL.

Its subcellular location is the cytoplasm. Its function is as follows. Together with the chaperonin GroEL, plays an essential role in assisting protein folding. The GroEL-GroES system forms a nano-cage that allows encapsulation of the non-native substrate proteins and provides a physical environment optimized to promote and accelerate protein folding. GroES binds to the apical surface of the GroEL ring, thereby capping the opening of the GroEL channel. This Wolbachia sp. subsp. Brugia malayi (strain TRS) protein is Co-chaperonin GroES.